A 120-amino-acid polypeptide reads, in one-letter code: MKVFIILGALNAMMAVGTGAFGAHGLENKLSAKYLSVWEKATTYQMYHGLGLLAIGIISGTTSINVNWVGWLLFFGIVFFSGSLYILALTQIRIIGAITPIGGVLFIVGWLMLVIGTFKI.

Transmembrane regions (helical) follow at residues 3–23, 46–66, 69–89, and 94–114; these read VFII…AFGA, MYHG…SINV, VGWL…ILAL, and IIGA…LMLV.

Belongs to the UPF0382 family.

The protein localises to the cell membrane. This Staphylococcus saprophyticus subsp. saprophyticus (strain ATCC 15305 / DSM 20229 / NCIMB 8711 / NCTC 7292 / S-41) protein is UPF0382 membrane protein SSP2132.